The sequence spans 189 residues: Nucleolar protein 16 (189 aa).

A compositionally biased stretch (basic residues) spans 1-33 (MARDVKKRGKPAYTNRRNRQKYLKKKDNKKKLS). The interval 1–34 (MARDVKKRGKPAYTNRRNRQKYLKKKDNKKKLSK) is disordered.

This sequence belongs to the NOP16 family.

Its subcellular location is the nucleus. The protein resides in the nucleolus. This chain is Nucleolar protein 16, found in Caenorhabditis elegans.